The sequence spans 649 residues: Phosphomethylpyrimidine synthase (649 aa).

Residues asparagine 235, methionine 264, tyrosine 293, histidine 329, 349-351 (SRG), 390-393 (DGLR), and glutamate 429 contribute to the substrate site. Residue histidine 433 participates in Zn(2+) binding. A substrate-binding site is contributed by tyrosine 456. Histidine 497 contributes to the Zn(2+) binding site. Residues cysteine 577, cysteine 580, and cysteine 585 each contribute to the [4Fe-4S] cluster site. Residues 620–649 (GMRQKSQEFRDTGSELYHPAVGAKEAQLEE) form a disordered region. The segment covering 621–632 (MRQKSQEFRDTG) has biased composition (basic and acidic residues).

Belongs to the ThiC family. As to quaternary structure, homodimer. Requires [4Fe-4S] cluster as cofactor.

The catalysed reaction is 5-amino-1-(5-phospho-beta-D-ribosyl)imidazole + S-adenosyl-L-methionine = 4-amino-2-methyl-5-(phosphooxymethyl)pyrimidine + CO + 5'-deoxyadenosine + formate + L-methionine + 3 H(+). The protein operates within cofactor biosynthesis; thiamine diphosphate biosynthesis. Catalyzes the synthesis of the hydroxymethylpyrimidine phosphate (HMP-P) moiety of thiamine from aminoimidazole ribotide (AIR) in a radical S-adenosyl-L-methionine (SAM)-dependent reaction. This chain is Phosphomethylpyrimidine synthase, found in Vibrio atlanticus (strain LGP32) (Vibrio splendidus (strain Mel32)).